The chain runs to 212 residues: Pyridoxine/pyridoxamine 5'-phosphate oxidase (212 aa).

Residues Arg-8–Tyr-11 and Lys-66 contribute to the substrate site. FMN contacts are provided by residues Arg-61 to Lys-66, Phe-76 to Thr-77, Lys-83, and Gln-105. Positions 123, 127, and 131 each coordinate substrate. FMN is bound by residues Gln-140–Ser-141 and Trp-185. Arg-191–His-193 is a binding site for substrate. Residue Arg-195 participates in FMN binding.

The protein belongs to the pyridoxamine 5'-phosphate oxidase family. As to quaternary structure, homodimer. The cofactor is FMN.

It carries out the reaction pyridoxamine 5'-phosphate + O2 + H2O = pyridoxal 5'-phosphate + H2O2 + NH4(+). The catalysed reaction is pyridoxine 5'-phosphate + O2 = pyridoxal 5'-phosphate + H2O2. It participates in cofactor metabolism; pyridoxal 5'-phosphate salvage; pyridoxal 5'-phosphate from pyridoxamine 5'-phosphate: step 1/1. It functions in the pathway cofactor metabolism; pyridoxal 5'-phosphate salvage; pyridoxal 5'-phosphate from pyridoxine 5'-phosphate: step 1/1. Functionally, catalyzes the oxidation of either pyridoxine 5'-phosphate (PNP) or pyridoxamine 5'-phosphate (PMP) into pyridoxal 5'-phosphate (PLP). This chain is Pyridoxine/pyridoxamine 5'-phosphate oxidase, found in Leptospira biflexa serovar Patoc (strain Patoc 1 / Ames).